The sequence spans 276 residues: Elongation factor Ts (276 aa).

Residues 81–84 (TDFV) form an involved in Mg(2+) ion dislocation from EF-Tu region.

It belongs to the EF-Ts family.

The protein resides in the cytoplasm. Associates with the EF-Tu.GDP complex and induces the exchange of GDP to GTP. It remains bound to the aminoacyl-tRNA.EF-Tu.GTP complex up to the GTP hydrolysis stage on the ribosome. This Leifsonia xyli subsp. xyli (strain CTCB07) protein is Elongation factor Ts.